Here is a 487-residue protein sequence, read N- to C-terminus: L-tartrate/succinate antiporter (487 aa).

14 helical membrane-spanning segments follow: residues 10–30 (YLAP…AGLE), 33–53 (TWLY…EPVP), 54–74 (GAVV…WLLF), 93–113 (WAVS…FMFG), 137–157 (TLFL…VTPS), 189–209 (IGSY…AIFL), 236–256 (FLGM…LAYV), 292–312 (LMVG…AAMV), 313–333 (GYSV…DIVS), 340–360 (VFFW…TGFI), 370–390 (SLSG…FYLL), 393–413 (FFAS…AAAL), 418–438 (IPLP…SILT), and 465–485 (IFGL…MPVV).

The protein belongs to the SLC13A/DASS transporter (TC 2.A.47) family. DIT1 subfamily.

It localises to the cell inner membrane. The enzyme catalyses (2R,3R)-tartrate(out) + succinate(in) = (2R,3R)-tartrate(in) + succinate(out). Functionally, catalyzes the uptake of tartrate in exchange for intracellular succinate. Essential for anaerobic L-tartrate fermentation. This Escherichia coli O157:H7 protein is L-tartrate/succinate antiporter (ttdT).